Here is a 246-residue protein sequence, read N- to C-terminus: tRNA (guanine-N(1)-)-methyltransferase (246 aa).

S-adenosyl-L-methionine contacts are provided by residues glycine 113 and 132–137 (LGDYVL).

The protein belongs to the RNA methyltransferase TrmD family. In terms of assembly, homodimer.

It localises to the cytoplasm. It carries out the reaction guanosine(37) in tRNA + S-adenosyl-L-methionine = N(1)-methylguanosine(37) in tRNA + S-adenosyl-L-homocysteine + H(+). Specifically methylates guanosine-37 in various tRNAs. The protein is tRNA (guanine-N(1)-)-methyltransferase of Lactiplantibacillus plantarum (strain ATCC BAA-793 / NCIMB 8826 / WCFS1) (Lactobacillus plantarum).